Consider the following 474-residue polypeptide: Phenolic acid decarboxylase (474 aa).

Residues N161, H182, and E224 each coordinate Mn(2+). Prenylated FMN is bound by residues 161–166 and 181–182; these read NVGTYR and MH. The active-site Proton donor is E273.

It belongs to the UbiD family. YclC subfamily. It depends on prenylated FMN as a cofactor. Mn(2+) is required as a cofactor.

It catalyses the reaction vanillate + H(+) = guaiacol + CO2. Functionally, involved in the non-oxidative decarboxylation and detoxification of phenolic derivatives under both aerobic and anaerobic conditions. Phenolic acid decarboxylase that catalyzes the reversible decarboxylation of vanillate. The sequence is that of Phenolic acid decarboxylase from Streptomyces sp. (strain D7).